The chain runs to 53 residues: Large ribosomal subunit protein eL40 (53 aa).

The protein belongs to the eukaryotic ribosomal protein eL40 family.

This chain is Large ribosomal subunit protein eL40, found in Pyrobaculum neutrophilum (strain DSM 2338 / JCM 9278 / NBRC 100436 / V24Sta) (Thermoproteus neutrophilus).